A 385-amino-acid polypeptide reads, in one-letter code: 8-amino-7-oxononanoate synthase (385 aa).

Position 21 (Arg21) interacts with substrate. 108–109 (GF) is a pyridoxal 5'-phosphate binding site. His133 is a substrate binding site. Ser179, His207, and Thr233 together coordinate pyridoxal 5'-phosphate. At Lys236 the chain carries N6-(pyridoxal phosphate)lysine. Residue Thr352 coordinates substrate.

Belongs to the class-II pyridoxal-phosphate-dependent aminotransferase family. BioF subfamily. Homodimer. Requires pyridoxal 5'-phosphate as cofactor.

It carries out the reaction 6-carboxyhexanoyl-[ACP] + L-alanine + H(+) = (8S)-8-amino-7-oxononanoate + holo-[ACP] + CO2. It functions in the pathway cofactor biosynthesis; biotin biosynthesis. Catalyzes the decarboxylative condensation of pimeloyl-[acyl-carrier protein] and L-alanine to produce 8-amino-7-oxononanoate (AON), [acyl-carrier protein], and carbon dioxide. The protein is 8-amino-7-oxononanoate synthase of Klebsiella pneumoniae subsp. pneumoniae (strain ATCC 700721 / MGH 78578).